The chain runs to 246 residues: Ribosome maturation factor RimM (246 aa).

Positions 1–15 (MKRKQESKGAGEKRQ) are enriched in basic and acidic residues. Positions 1-63 (MKRKQESKGA…NPQFTTPNPD (63 aa)) are disordered. The span at 45 to 54 (VPSPQSPIPN) shows a compositional bias: pro residues. In terms of domain architecture, PRC barrel spans 158 to 239 (GEDEYHVVDL…RIEITPPPGL (82 aa)).

It belongs to the RimM family. Binds ribosomal protein uS19.

It is found in the cytoplasm. In terms of biological role, an accessory protein needed during the final step in the assembly of 30S ribosomal subunit, possibly for assembly of the head region. Essential for efficient processing of 16S rRNA. May be needed both before and after RbfA during the maturation of 16S rRNA. It has affinity for free ribosomal 30S subunits but not for 70S ribosomes. The chain is Ribosome maturation factor RimM from Nostoc sp. (strain PCC 7120 / SAG 25.82 / UTEX 2576).